A 63-amino-acid polypeptide reads, in one-letter code: ComG operon repressor (63 aa).

Functionally, negatively regulates the transcription of the comG operon. This is ComG operon repressor (comZ) from Bacillus subtilis (strain 168).